Reading from the N-terminus, the 666-residue chain is uncharacterized protein (666 aa).

This is an uncharacterized protein from Acanthamoeba polyphaga mimivirus (APMV).